A 1051-amino-acid polypeptide reads, in one-letter code: MSQQLQQAVEIAYSSTAEPALKKQALEYVQNVKAGAGAAEVFVGYLGDAGTSDVGRFVALQALSELAGEGGPARLAFLKDSAMRALRGETGGVWGAPEYVRNKTAEWVSRLFYAMYGEVNGNMWNSFFEDVAQATGVAGLRGSAAVEYNAAGLDAFLRVCAAINSEIGDQTFVRSKDAQVKNNSLKDAMRVQDVATLTSIWRHALEAMRQDVQRQDVAVLVLQCIGSFISWIDINLIVNSEYISTIYAYLNYPKTRIACAQCLCEILSKKMKPGDKLQLLGMLSLTDKVLQLGDVEVEVHEQLAKLTSSVGLELSVILEQCHDDSSSAGSCSIANSADHQIIHQVAPLVLKFMNHEYDSVTQQTFPFISHYLTFLKRLFALGGKPGSAVALNSKKLPLDDDHRQFLTSLIIVCMNKMKFDETCSYDDEDEVEEFVETVRSKLKVFQDNIAVINPAIYMENISKHIKSLLLGNSWRDLELAIYQMHNFAESIRNNLFGLNKSAISQSQPAQLMTTFMQDILDNSAIFQSSNPLIQISFFELIVRHYNFISHTGKNDISILSIFCTPFSMFNDSEKVRLRSWYLFSRLIKVTKPRLDDESLSQLLSKLAPLLAVKLLPNVANDSEIDTTFDNQLYIFEGVGILIGAKAKEEYSILDGVLSPLFADLESCIAAPVKSPEIVVQAHHILMAIGTIARGVHAGLVPENQLNNPQVNAALVHKSLIEKFSNIAEVILVTFSYFNKYETIRDATRFSFARLTPILKNDIIPFSSRLISIFLESDLKTIEMNDFLGFLGQMVHTFHADDNCYQLFNNLFTPVIKKVFDLVAQVEQEGSLASGANTAPAVSKVANGKNVVITDSFRDKVQLKKAYYSFLQSFVSNNVTSLLLTTANRNILPLILSDLLSYTPAEIHETSSMKLSLNVLINFVKFFGTGRCADFKDRNANTFEPLEGLSEFFITKVVPLVFEIPFKPEYEFNIDDGSCLVLAADLSRLLKALYDVNGDPANNASLKYLTEAYFPQVQFPQELSMEFIQTLATADEKAFEKYFVSFIKRMRS.

Belongs to the exportin family.

Its subcellular location is the nucleus. The protein localises to the cytoplasm. Its function is as follows. tRNA nucleus export receptor which facilitates tRNA translocation across the nuclear pore complex. Involved in pre-tRNA splicing, probably by affecting the interaction of pre-tRNA with splicing endonuclease. This Eremothecium gossypii (strain ATCC 10895 / CBS 109.51 / FGSC 9923 / NRRL Y-1056) (Yeast) protein is Exportin-T (LOS1).